The chain runs to 107 residues: High mobility group protein HMG-I/HMG-Y (107 aa).

Residues 1–13 (MSESGSKSSQPLA) show a composition bias toward polar residues. A disordered region spans residues 1–107 (MSESGSKSSQ…ISQESSEEEQ (107 aa)). The residue at position 2 (Ser-2) is an N-acetylserine. N6-acetyllysine is present on Lys-7. The residue at position 8 (Ser-8) is an ADP-ribosylserine. Ser-9 bears the ADP-ribosylserine; alternate mark. Residue Ser-9 is modified to Phosphoserine; alternate. The residue at position 15 (Lys-15) is an N6-acetyllysine; alternate. Residue Lys-15 forms a Glycyl lysine isopeptide (Lys-Gly) (interchain with G-Cter in SUMO2); alternate linkage. Positions 15–24 (KQEKDGTEKR) are enriched in basic and acidic residues. Residues 21–31 (TEKRGRGRPRK) constitute a DNA-binding region (a.T hook 1). Arg-26 is modified (asymmetric dimethylarginine; alternate). Omega-N-methylarginine; alternate is present on Arg-26. Arg-26 carries the post-translational modification Symmetric dimethylarginine; alternate. Position 36 is a phosphoserine; by HIPK2 and CDC2 (Ser-36). Thr-39 carries the post-translational modification Phosphothreonine. Phosphoserine occurs at positions 44 and 49. Phosphothreonine; by HIPK2 and CDC2 is present on Thr-53. DNA-binding regions (a.T hook) lie at residues 53 to 63 (TPKRPRGRPKG) and 78 to 89 (APGRKPRGRPKK). The segment at 53 to 77 (TPKRPRGRPKGSKNKGAAKTRKVTT) is interaction with HIPK2. A compositionally biased stretch (basic residues) spans 55-74 (KRPRGRPKGSKNKGAAKTRK). Residues Arg-58 and Arg-60 each carry the asymmetric dimethylarginine; by PRMT6; alternate modification. Omega-N-methylarginine; by PRMT6; alternate occurs at positions 58 and 60. Positions 93–107 (EEEEGISQESSEEEQ) are enriched in acidic residues. A phosphoserine mark is found at Ser-99, Ser-102, and Ser-103.

This sequence belongs to the HMGA family. In terms of assembly, interacts with HIPK2. In terms of processing, isoforms HMG-I and HMG-Y can be phosphorylated by HIPK2. Phosphorylation may modulate DNA-binding affinity. Methylation at Arg-58 is mutually exclusive with methylation at Arg-60.

It is found in the nucleus. The protein localises to the chromosome. In terms of biological role, HMG-I/Y bind preferentially to the minor groove of A+T rich regions in double-stranded DNA. It is suggested that these proteins could function in nucleosome phasing and in the 3'-end processing of mRNA transcripts. They are also involved in the transcription regulation of genes containing, or in close proximity to A+T-rich regions. This is High mobility group protein HMG-I/HMG-Y (Hmga1) from Mus musculus (Mouse).